We begin with the raw amino-acid sequence, 333 residues long: UPF0324 membrane protein WS2204 (333 aa).

9 helical membrane passes run 4-26 (SIRPFVLGIALCTLIGIVAFGLA), 31-53 (FLSLHLSPLILSVLVGMALAPWY), 59-81 (IGIIGVLWCGKRLLRLGIVLFGF), 88-110 (LLGVGVEGFLIALLVVAGIFTLG), 125-147 (SMLIACGSAVCGAAAILALESLS), 154-176 (TAIAVGVVVLFGLLSMFLYPLVY), 218-240 (VIVKMIRVILLVPLLLLLSFTIL), 253-275 (PWFALLFLGAILLGSLFFFPSWL), and 310-332 (ALALGAILWGVLLFGGLGLVKLL).

Belongs to the UPF0324 family.

Its subcellular location is the cell membrane. This is UPF0324 membrane protein WS2204 from Wolinella succinogenes (strain ATCC 29543 / DSM 1740 / CCUG 13145 / JCM 31913 / LMG 7466 / NCTC 11488 / FDC 602W) (Vibrio succinogenes).